The chain runs to 1192 residues: Reticulon-4 (1192 aa).

An N-acetylmethionine modification is found at Met1. The tract at residues 1–204 (MEDLDQSPLV…ASEPVIRSSA (204 aa)) is disordered. Over 1–1018 (MEDLDQSPLV…LYWRDIKKTG (1018 aa)) the chain is Cytoplasmic. 2 positions are modified to phosphoserine: Ser7 and Ser15. Over residues 31-53 (PEDEEEEEEEEEEDEDEDLEELE) the composition is skewed to acidic residues. Low complexity predominate over residues 65–77 (AAPVPTAPAAGAP). Positions 87–101 (PPAPRGPLPAAPPVA) are enriched in pro residues. Ser107 bears the Phosphoserine mark. Over residues 110-132 (PSPVSSTVPAPSPLSAAAVSPSK) the composition is skewed to low complexity. Positions 141–150 (ARPPPPPPAS) are enriched in pro residues. A Phosphoserine modification is found at Ser152. Pro residues predominate over residues 159–173 (WTPPAPAPAAPPSTP). Phosphoserine is present on residues Ser181, Ser182, Ser184, Ser361, and Ser446. The segment at 427 to 458 (DSLEQTNHEKDSESSNDDTSFPSTPEGIKDRS) is disordered. The residue at position 450 (Thr450) is a Phosphothreonine. Position 511 is a phosphoserine (Ser511). Positions 722–734 (AKVEQPVPDHSEL) are enriched in basic and acidic residues. Residues 722-762 (AKVEQPVPDHSELVEDSSPDSEPVDLFSDDSIPDVPQKQDE) form a disordered region. A compositionally biased stretch (acidic residues) spans 735 to 753 (VEDSSPDSEPVDLFSDDSI). Residue Ser749 is modified to Phosphoserine. Thr858 carries the phosphothreonine modification. 2 positions are modified to phosphoserine: Ser881 and Ser991. In terms of domain architecture, Reticulon spans 1005-1192 (VVDLLYWRDI…KIPGLKRKAE (188 aa)). The helical transmembrane segment at 1019–1039 (VVFGASLFLLLSLTVFSIVSV) threads the bilayer. The Lumenal segment spans residues 1040–1133 (TAYIALALLS…LMWVFTYVGA (94 aa)). Lys1104 carries the post-translational modification N6-acetyllysine. The helical transmembrane segment at 1134 to 1154 (LFNGLTLLILALISLFSVPVI) threads the bilayer. The Cytoplasmic segment spans residues 1155–1192 (YERHQAQIDHYLGLANKNVKDAMAKIQAKIPGLKRKAE).

As to quaternary structure, binds to RTN4R. Interacts with ATL1. Interacts with TMEM170A. Interacts with RTN4IP1. In terms of assembly, interacts in trans with CNTNAP1. Interacts with REEP5. Interacts with synaptic plasticity regulator PANTS; the interaction results in enhanced RTN4-mediated inhibition of AMPA receptor clustering. Interacts with GPR50. Homodimer. Interacts with BAD/Bcl-xl and BCL2. Interact with RTN3. Interacts with NGBR. Interacts with SPTLC1. Interacts with GRAMD4. Interacts with CDH5. Interacts with BACE1 and BACE2. Interacts with REEP5. Interacts with RETREG3. As to quaternary structure, interacts with BACE1 and BACE2. Interacts with TMEM33. As to expression, isoform A: is specifically expressed in brain and testis and weakly in heart and skeletal muscle. Isoform B: widely expressed except for the liver. Highly expressed in endothelial cells and vascular smooth muscle cells, including blood vessels and mesenteric arteries. Isoform C: is expressed in brain, skeletal muscle and adipocytes. Isoform D is testis-specific.

Its subcellular location is the endoplasmic reticulum membrane. The protein localises to the cell membrane. It is found in the synapse. The protein resides in the cell junction. Its function is as follows. Required to induce the formation and stabilization of endoplasmic reticulum (ER) tubules. They regulate membrane morphogenesis in the ER by promoting tubular ER production. They influence nuclear envelope expansion, nuclear pore complex formation and proper localization of inner nuclear membrane proteins. However each isoform have specific functions mainly depending on their tissue expression specificities. Developmental neurite growth regulatory factor with a role as a negative regulator of axon-axon adhesion and growth, and as a facilitator of neurite branching. Regulates neurite fasciculation, branching and extension in the developing nervous system. Involved in down-regulation of growth, stabilization of wiring and restriction of plasticity in the adult CNS. Regulates the radial migration of cortical neurons via an RTN4R-LINGO1 containing receptor complex. Acts as a negative regulator of central nervous system angiogenesis. Inhibits spreading, migration and sprouting of primary brain microvascular endothelial cells (MVECs). Also induces the retraction of MVECs lamellipodia and filopodia in a ROCK pathway-dependent manner. In terms of biological role, mainly function in endothelial cells and vascular smooth muscle cells, is also involved in immune system regulation. Modulator of vascular remodeling, promotes the migration of endothelial cells but inhibits the migration of vascular smooth muscle cells. Regulates endothelial sphingolipid biosynthesis with direct effects on vascular function and blood pressure. Inhibits serine palmitoyltransferase, SPTLC1, the rate-limiting enzyme of the novo sphingolipid biosynthetic pathway, thereby controlling production of endothelial sphingosine-1-phosphate (S1P). Required to promote macrophage homing and functions such as cytokine/chemokine gene expression involved in angiogenesis, arteriogenesis and tissue repair. Mediates ICAM1 induced transendothelial migration of leukocytes such as monocytes and neutrophils and acute inflammation. Necessary for immune responses triggered by nucleic acid sensing TLRs, such as TLR9, is required for proper TLR9 location to endolysosomes. Also involved in immune response to LPS. Plays a role in liver regeneration through the modulation of hepatocytes proliferation. Reduces the anti-apoptotic activity of Bcl-xl and Bcl-2. This is likely consecutive to their change in subcellular location, from the mitochondria to the endoplasmic reticulum, after binding and sequestration. With isoform C, inhibits BACE1 activity and amyloid precursor protein processing. Functionally, regulates cardiomyocyte apoptosis upon hypoxic conditions. With isoform B, inhibits BACE1 activity and amyloid precursor protein processing. In Homo sapiens (Human), this protein is Reticulon-4.